We begin with the raw amino-acid sequence, 132 residues long: Small heat shock protein hspL (132 aa).

In terms of domain architecture, sHSP spans 15–131 (TFTNFVSAPV…VKMSNNNKVE (117 aa)).

It belongs to the small heat shock protein (HSP20) family.

This chain is Small heat shock protein hspL (hspL), found in Dictyostelium discoideum (Social amoeba).